Here is a 600-residue protein sequence, read N- to C-terminus: E3 ubiquitin-protein ligase RLIM (600 aa).

Met1 is modified (N-acetylmethionine). The span at 1–11 shows a compositional bias: basic and acidic residues; that stretch reads MENSDSNDKGS. Disordered regions lie at residues 1–24, 49–355, and 417–497; these read MENSDSNDKGSDQSAAQRRSQMDR, NNLL…ERGG, and SDSE…VTFD. Composition is skewed to polar residues over residues 103-131 and 140-152; these read SVRQTGNTTRSGQRGNQSWRAVSRTNPNS and INVNRNNGSQTSE. Ser163 carries the post-translational modification Phosphoserine. Residues 166 to 175 are compositionally biased toward polar residues; sequence NMESSSQRQM. A compositionally biased stretch (low complexity) spans 176–187; it reads ENSASESASARP. 3 positions are modified to phosphoserine: Ser194, Ser227, and Ser229. Residues 213–228 are compositionally biased toward basic and acidic residues; the sequence is RSPEHRRTRARAERSR. Residues 244-255 show a composition bias toward polar residues; the sequence is LEQSSENEPEGS. At Ser269 the chain carries Phosphoserine. Low complexity predominate over residues 288–306; it reads SQGTSSSDTGSNSESSGSG. Positions 322–332 are enriched in basic and acidic residues; sequence RPGEYRQRDSI. A compositionally biased stretch (polar residues) spans 333 to 349; the sequence is ASRTRSRSQAPNNTVTY. A compositionally biased stretch (low complexity) spans 448 to 475; that stretch reads SGSSSSSSPSPSSSGESSESSSEMFEGS. The segment at 546–587 adopts an RING-type zinc-finger fold; that stretch reads CSVCITEYTEGNKLRKLPCSHEYHVHCIDRWLSENSTCPICR. A PDZ-binding motif is present at residues 597–600; the sequence is ESVV.

The protein belongs to the RNF12 family. In terms of assembly, interacts (via N-terminus) with TERF1. Interacts (via C-terminus) with ESR1. Interacts with LIM/homeobox factors such as LHX3. Interacts with LDB1, LDB2 and SIN3A. Interacts with LIMK1.

It localises to the nucleus. It catalyses the reaction S-ubiquitinyl-[E2 ubiquitin-conjugating enzyme]-L-cysteine + [acceptor protein]-L-lysine = [E2 ubiquitin-conjugating enzyme]-L-cysteine + N(6)-ubiquitinyl-[acceptor protein]-L-lysine.. It participates in protein modification; protein ubiquitination. Functionally, E3 ubiquitin-protein ligase that acts as a negative coregulator for LIM homeodomain transcription factors by mediating the ubiquitination and subsequent degradation of LIM cofactors LDB1 and LDB2 and by mediating the recruitment the SIN3a/histone deacetylase corepressor complex. Ubiquitination and degradation of LIM cofactors LDB1 and LDB2 allows DNA-bound LIM homeodomain transcription factors to interact with other protein partners such as RLIM. Plays a role in telomere length-mediated growth suppression by mediating the ubiquitination and degradation of TERF1. By targeting ZFP42 for degradation, acts as an activator of random inactivation of X chromosome in the embryo, a stochastic process in which one X chromosome is inactivated to minimize sex-related dosage differences of X-encoded genes in somatic cells of female placental mammals. The sequence is that of E3 ubiquitin-protein ligase RLIM (Rlim) from Mus musculus (Mouse).